A 429-amino-acid chain; its full sequence is Serine--tRNA ligase (429 aa).

228–230 (TSE) contacts L-serine. An ATP-binding site is contributed by 259 to 261 (RAE). E282 lines the L-serine pocket. 346–349 (EISS) is an ATP binding site. L-serine is bound at residue S384.

This sequence belongs to the class-II aminoacyl-tRNA synthetase family. Type-1 seryl-tRNA synthetase subfamily. As to quaternary structure, homodimer. The tRNA molecule binds across the dimer.

Its subcellular location is the cytoplasm. It carries out the reaction tRNA(Ser) + L-serine + ATP = L-seryl-tRNA(Ser) + AMP + diphosphate + H(+). The enzyme catalyses tRNA(Sec) + L-serine + ATP = L-seryl-tRNA(Sec) + AMP + diphosphate + H(+). It participates in aminoacyl-tRNA biosynthesis; selenocysteinyl-tRNA(Sec) biosynthesis; L-seryl-tRNA(Sec) from L-serine and tRNA(Sec): step 1/1. Functionally, catalyzes the attachment of serine to tRNA(Ser). Is also able to aminoacylate tRNA(Sec) with serine, to form the misacylated tRNA L-seryl-tRNA(Sec), which will be further converted into selenocysteinyl-tRNA(Sec). The sequence is that of Serine--tRNA ligase from Anaplasma marginale (strain St. Maries).